Consider the following 247-residue polypeptide: Ubiquinone biosynthesis O-methyltransferase (247 aa).

Positions 39, 70, 91, and 134 each coordinate S-adenosyl-L-methionine.

The protein belongs to the methyltransferase superfamily. UbiG/COQ3 family.

The enzyme catalyses a 3-demethylubiquinol + S-adenosyl-L-methionine = a ubiquinol + S-adenosyl-L-homocysteine + H(+). It catalyses the reaction a 3-(all-trans-polyprenyl)benzene-1,2-diol + S-adenosyl-L-methionine = a 2-methoxy-6-(all-trans-polyprenyl)phenol + S-adenosyl-L-homocysteine + H(+). Its pathway is cofactor biosynthesis; ubiquinone biosynthesis. O-methyltransferase that catalyzes the 2 O-methylation steps in the ubiquinone biosynthetic pathway. This Cereibacter sphaeroides (strain ATCC 17029 / ATH 2.4.9) (Rhodobacter sphaeroides) protein is Ubiquinone biosynthesis O-methyltransferase.